We begin with the raw amino-acid sequence, 331 residues long: Phosphoenolpyruvate transferase (331 aa).

7,8-didemethyl-8-hydroxy-5-deazariboflavin is bound at residue Asp-63.

Belongs to the CofD family. Homodimer. Mg(2+) serves as cofactor.

It catalyses the reaction enolpyruvoyl-2-diphospho-5'-guanosine + 7,8-didemethyl-8-hydroxy-5-deazariboflavin = dehydro coenzyme F420-0 + GMP + H(+). Its pathway is cofactor biosynthesis; coenzyme F420 biosynthesis. Functionally, catalyzes the transfer of the phosphoenolpyruvate moiety from enoylpyruvoyl-2-diphospho-5'-guanosine (EPPG) to 7,8-didemethyl-8-hydroxy-5-deazariboflavin (FO) with the formation of dehydro coenzyme F420-0 and GMP. The protein is Phosphoenolpyruvate transferase of Mycobacterium sp. (strain JLS).